Consider the following 142-residue polypeptide: Large ribosomal subunit protein uL13 (142 aa).

It belongs to the universal ribosomal protein uL13 family. As to quaternary structure, part of the 50S ribosomal subunit.

In terms of biological role, this protein is one of the early assembly proteins of the 50S ribosomal subunit, although it is not seen to bind rRNA by itself. It is important during the early stages of 50S assembly. This Haemophilus influenzae (strain 86-028NP) protein is Large ribosomal subunit protein uL13.